The chain runs to 248 residues: UPF0328 protein ECU06_0030/ECU06_1690/ECU11_0020 (248 aa).

Disordered regions lie at residues 1 to 34 (MVRH…HPSR) and 51 to 81 (ASAE…ILPD). Polar residues-rich tracts occupy residues 10 to 19 (PKTTNPNPES) and 61 to 76 (QNLS…THQS).

It belongs to the UPF0328 family.

The chain is UPF0328 protein ECU06_0030/ECU06_1690/ECU11_0020 from Encephalitozoon cuniculi (strain GB-M1) (Microsporidian parasite).